Consider the following 206-residue polypeptide: Putative 3-methyladenine DNA glycosylase (206 aa).

The protein belongs to the DNA glycosylase MPG family.

In Staphylococcus carnosus (strain TM300), this protein is Putative 3-methyladenine DNA glycosylase.